A 30-amino-acid polypeptide reads, in one-letter code: Cytochrome c oxidase subunit 5C (30 aa).

The helical transmembrane segment at valine 15 to glycine 30 threads the bilayer.

The protein belongs to the cytochrome c oxidase subunit 5C family.

The protein resides in the mitochondrion inner membrane. Its function is as follows. This protein is one of the nuclear-coded polypeptide chains of cytochrome c oxidase, the terminal oxidase in mitochondrial electron transport. This chain is Cytochrome c oxidase subunit 5C (COX5C), found in Solanum tuberosum (Potato).